The following is a 134-amino-acid chain: Large ribosomal subunit protein bL17 (134 aa).

This sequence belongs to the bacterial ribosomal protein bL17 family. In terms of assembly, part of the 50S ribosomal subunit. Contacts protein L32.

This chain is Large ribosomal subunit protein bL17, found in Paracidovorax citrulli (strain AAC00-1) (Acidovorax citrulli).